The following is a 290-amino-acid chain: Aquaporin-12 (290 aa).

A run of 2 helical transmembrane segments spans residues 1 to 21 and 67 to 87; these read MASL…CEVA and FGPD…GVTF. Residues 93 to 95 carry the NPA 1 motif; it reads NPT. 3 helical membrane-spanning segments follow: residues 112–138, 158–178, and 191–211; these read LLKL…WELS, SVLQ…LSLL, and ALAL…SAFF. An NPA 2 motif is present at residues 212-214; the sequence is NPA. Residues 228-248 form a helical membrane-spanning segment; the sequence is LLEYAHVYCLGPVAGMILAVL. The disordered stretch occupies residues 271 to 290; that stretch reads RTPRGKLSPGSVDAKMHKGE.

The protein belongs to the MIP/aquaporin (TC 1.A.8) family. AQP11/AQP12 subfamily. As to expression, restricted to pancreatic acinar cells.

It localises to the membrane. Its function is as follows. Aquaporins facilitate the transport of water and small neutral solutes across cell membranes. This chain is Aquaporin-12 (Aqp12), found in Mus musculus (Mouse).